The sequence spans 286 residues: ATP synthase gamma chain (286 aa).

The protein belongs to the ATPase gamma chain family. As to quaternary structure, F-type ATPases have 2 components, CF(1) - the catalytic core - and CF(0) - the membrane proton channel. CF(1) has five subunits: alpha(3), beta(3), gamma(1), delta(1), epsilon(1). CF(0) has three main subunits: a, b and c.

The protein resides in the cell inner membrane. Produces ATP from ADP in the presence of a proton gradient across the membrane. The gamma chain is believed to be important in regulating ATPase activity and the flow of protons through the CF(0) complex. The chain is ATP synthase gamma chain from Solibacter usitatus (strain Ellin6076).